The sequence spans 231 residues: MAVFLEAKNAHAVLKRFPRANEFLEELRQGTIERECMEEICSYEEVKEVFENKEKTMEFWKGYPNAVYSVRDPSQSSDAMYVVVPLLGVVLLIVIALFIIWRCQLQKATRHHPSYAQNRYLASRAGHNLPRVMVYRGTVHSQGESSGHREAGNNPQIVMGPSRGGRTTVRLESTLYLPELSLSRLSSATPPPSYEEVTAPQEGSSEEASVSYSDPPPKYEEIVAASPSADK.

Positions 1–19 are excised as a propeptide; it reads MAVFLEAKNAHAVLKRFPR. Residues 20–65 enclose the Gla domain; the sequence is ANEFLEELRQGTIERECMEEICSYEEVKEVFENKEKTMEFWKGYPN. Over 20-78 the chain is Extracellular; that stretch reads ANEFLEELRQGTIERECMEEICSYEEVKEVFENKEKTMEFWKGYPNAVYSVRDPSQSSD. 13 positions are modified to 4-carboxyglutamate: glutamate 22, glutamate 25, glutamate 26, glutamate 33, glutamate 35, glutamate 38, glutamate 39, glutamate 44, glutamate 45, glutamate 48, glutamate 51, glutamate 54, and glutamate 58. Cysteine 36 and cysteine 41 form a disulfide bridge. The helical transmembrane segment at 79–101 threads the bilayer; that stretch reads AMYVVVPLLGVVLLIVIALFIIW. The Cytoplasmic segment spans residues 102-231; the sequence is RCQLQKATRH…IVAASPSADK (130 aa). 2 disordered regions span residues 140 to 165 and 184 to 231; these read HSQG…SRGG and RLSS…SADK. The segment covering 201-212 has biased composition (polar residues); sequence QEGSSEEASVSY.

In terms of processing, gla residues are produced after subsequent post-translational modifications of glutamate by a vitamin K-dependent gamma-carboxylase.

The protein resides in the membrane. This Mus musculus (Mouse) protein is Transmembrane gamma-carboxyglutamic acid protein 3 (Prrg3).